Reading from the N-terminus, the 522-residue chain is Hydroxymethylglutaryl-CoA synthase, cytoplasmic (522 aa).

(3S)-3-hydroxy-3-methylglutaryl-CoA contacts are provided by Asp-43 and Ala-44. Glu-95 acts as the Proton donor/acceptor in catalysis. Positions 129, 167, 171, 221, 264, 273, 344, and 378 each coordinate (3S)-3-hydroxy-3-methylglutaryl-CoA. Cys-129 acts as the Acyl-thioester intermediate in catalysis. Catalysis depends on His-264, which acts as the Proton donor/acceptor.

It belongs to the thiolase-like superfamily. HMG-CoA synthase family. In terms of assembly, homodimer.

Its subcellular location is the cytoplasm. It catalyses the reaction acetoacetyl-CoA + acetyl-CoA + H2O = (3S)-3-hydroxy-3-methylglutaryl-CoA + CoA + H(+). It functions in the pathway metabolic intermediate biosynthesis; (R)-mevalonate biosynthesis; (R)-mevalonate from acetyl-CoA: step 2/3. Functionally, catalyzes the condensation of acetyl-CoA with acetoacetyl-CoA to form HMG-CoA, which is converted by HMG-CoA reductase (HMGCR) into mevalonate, a precursor for cholesterol synthesis. The chain is Hydroxymethylglutaryl-CoA synthase, cytoplasmic (HMGCS1) from Gallus gallus (Chicken).